Reading from the N-terminus, the 292-residue chain is Nucleotide-binding protein SACE_2139 (292 aa).

Position 15–22 (Gly-15–Ser-22) interacts with ATP. Asp-66–Ser-69 lines the GTP pocket.

It belongs to the RapZ-like family.

Functionally, displays ATPase and GTPase activities. The sequence is that of Nucleotide-binding protein SACE_2139 from Saccharopolyspora erythraea (strain ATCC 11635 / DSM 40517 / JCM 4748 / NBRC 13426 / NCIMB 8594 / NRRL 2338).